A 161-amino-acid chain; its full sequence is Vitamin K-dependent protein C (161 aa).

The region spanning 1–161 (EKWELDLDIE…GCGLLHNYGV (161 aa)) is the Peptidase S1 domain. N-linked (GlcNAc...) asparagine glycosylation is present at asparagine 17. Catalysis depends on aspartate 26, which acts as the Charge relay system. Asparagine 82 is a glycosylation site (N-linked (GlcNAc...) asparagine). 2 disulfide bridges follow: cysteine 100-cysteine 114 and cysteine 125-cysteine 153. The Charge relay system role is filled by serine 129.

This sequence belongs to the peptidase S1 family. Plasma; synthesized in the liver.

Its subcellular location is the secreted. It is found in the golgi apparatus. It localises to the endoplasmic reticulum. It catalyses the reaction Degradation of blood coagulation factors Va and VIIIa.. Its function is as follows. Protein C is a vitamin K-dependent serine protease that regulates blood coagulation by inactivating factors Va and VIIIa in the presence of calcium ions and phospholipids. Exerts a protective effect on the endothelial cell barrier function. The sequence is that of Vitamin K-dependent protein C (PROC) from Macaca mulatta (Rhesus macaque).